The sequence spans 732 residues: B-cadherin (732 aa).

Positions 1 to 6 (LRRQKR) are excised as a propeptide. Cadherin domains are found at residues 6-114 (RDWV…KPQF), 115-227 (TQEV…APEF), 228-339 (DPKT…APVF), 340-443 (DPPL…VNDH), and 444-554 (GPEP…RVDT). Over 6–554 (RDWVIPPIKV…SCAQKPRVDT (549 aa)) the chain is Extracellular. The N-linked (GlcNAc...) asparagine glycan is linked to asparagine 137. The N-linked (GlcNAc...) asparagine glycan is linked to asparagine 410. A helical transmembrane segment spans residues 555–580 (GVPIVLAVLGAVLALLLVLLLLLLLV). At 581 to 732 (RRRKVVKEPL…ELYGGGEDEE (152 aa)) the chain is on the cytoplasmic side.

In terms of tissue distribution, expressed in a wide variety of tissues.

The protein localises to the cell membrane. In terms of biological role, cadherins are calcium-dependent cell adhesion proteins. They preferentially interact with themselves in a homophilic manner in connecting cells; cadherins may thus contribute to the sorting of heterogeneous cell types. B-cadherin may have important functions in neurogenesis, in at least some epithelia, and in embryogenesis. In Gallus gallus (Chicken), this protein is B-cadherin (K-CAM).